The primary structure comprises 404 residues: Alkane 1-monooxygenase 1 (404 aa).

A run of 4 helical transmembrane segments spans residues 25-45 (HLWILSVLWPATPIIGLYLVS), 47-67 (TGWSIWYGLVLILWYGLVPLI), 94-114 (VLTYLTVPIHYAALIISAWWV), and 119-139 (IGVFEFLALALSLGIVNGLAL). The Fe cation site is built by H143 and H147. A helical transmembrane segment spans residues 151-171 (TFDRWMAKLVLAVVGYGHFFI). Fe cation-binding residues include H173, H177, and H178. A helical membrane pass occupies residues 241-261 (VVLYAALLAFFGPLMLIFLPI). Fe cation-binding residues include H317, H320, and H321.

The protein belongs to the fatty acid desaturase type 1 family. AlkB subfamily. The cofactor is Fe(3+).

The protein resides in the cell inner membrane. The catalysed reaction is octane + 2 reduced [rubredoxin] + O2 + 2 H(+) = 2 oxidized [rubredoxin] + octan-1-ol + H2O. Its pathway is hydrocarbon metabolism; alkane degradation. Its function is as follows. Catalyzes the hydroxylation of n-alkanes and fatty acids in the presence of a NADH-rubredoxin reductase and rubredoxin. It preferably hydroxylases C5-C12 hydrocarbons. This is Alkane 1-monooxygenase 1 (alkB1) from Alcanivorax borkumensis (strain ATCC 700651 / DSM 11573 / NCIMB 13689 / SK2).